A 93-amino-acid polypeptide reads, in one-letter code: MPENAQVIMRYGPYSSIGLPVEHRTYRLEGLLAVLAEDGHQVLLEKIEDWNVVELMVNGEVVFRCNIKDLEFGGDGKLDPLCREARIAVLNAY.

It belongs to the UPF0728 family.

This is UPF0728 protein C10orf53 homolog from Bos taurus (Bovine).